Reading from the N-terminus, the 272-residue chain is Cytochrome b-c1 complex subunit Rieske-2, mitochondrial (272 aa).

The N-terminal 60 residues, 1–60 (MLRIAGRRASSLSRWPVRSVAPSSSAFISANHFSSDDDSSSPRSISPSLASVFLHHTRGF), are a transit peptide targeting the mitochondrion. Topologically, residues 61-109 (SSNSVSHAHDMGLVPDLPPTVAAIKNPTSKIVYDEHNHERYPPGDPSKR) are mitochondrial matrix. Residues 110-132 (AFAYFVLTGGRFVYASLVRLLIL) form a helical membrane-spanning segment. Topologically, residues 133-272 (KFVLSMSASK…FLEENKLLIG (140 aa)) are mitochondrial intermembrane. A Rieske domain is found at 182-270 (INLANSVDLG…YSFLEENKLL (89 aa)). Positions 215, 217, 234, and 237 each coordinate [2Fe-2S] cluster. An intrachain disulfide couples C220 to C236.

The protein belongs to the Rieske iron-sulfur protein family. In terms of assembly, component of the ubiquinol-cytochrome c oxidoreductase (cytochrome b-c1 complex, complex III, CIII), a multisubunit enzyme composed of 3 respiratory subunits cytochrome b, cytochrome c1 and Rieske protein, 2 core protein subunits, and several low-molecular weight protein subunits. The complex exists as an obligatory dimer and forms supercomplexes (SCs) in the inner mitochondrial membrane with cytochrome c oxidase (complex IV, CIV). Requires [2Fe-2S] cluster as cofactor. In terms of tissue distribution, high levels are seen in the flowers while a low level expression is seen in the roots, leaves and stems.

The protein resides in the mitochondrion inner membrane. It catalyses the reaction a quinol + 2 Fe(III)-[cytochrome c](out) = a quinone + 2 Fe(II)-[cytochrome c](out) + 2 H(+)(out). Functionally, component of the ubiquinol-cytochrome c oxidoreductase, a multisubunit transmembrane complex that is part of the mitochondrial electron transport chain which drives oxidative phosphorylation. The respiratory chain contains 3 multisubunit complexes succinate dehydrogenase (complex II, CII), ubiquinol-cytochrome c oxidoreductase (cytochrome b-c1 complex, complex III, CIII) and cytochrome c oxidase (complex IV, CIV), that cooperate to transfer electrons derived from NADH and succinate to molecular oxygen, creating an electrochemical gradient over the inner membrane that drives transmembrane transport and the ATP synthase. The cytochrome b-c1 complex catalyzes electron transfer from ubiquinol to cytochrome c, linking this redox reaction to translocation of protons across the mitochondrial inner membrane, with protons being carried across the membrane as hydrogens on the quinol. In the process called Q cycle, 2 protons are consumed from the matrix, 4 protons are released into the intermembrane space and 2 electrons are passed to cytochrome c. The Rieske protein is a catalytic core subunit containing a [2Fe-2S] iron-sulfur cluster. It cycles between 2 conformational states during catalysis to transfer electrons from the quinol bound in the Q(0) site in cytochrome b to cytochrome c1. The chain is Cytochrome b-c1 complex subunit Rieske-2, mitochondrial from Nicotiana tabacum (Common tobacco).